We begin with the raw amino-acid sequence, 1056 residues long: Isoleucine--tRNA ligase (1056 aa).

Residues 1 to 13 (MCDQGEVSSQNSS) show a composition bias toward polar residues. The segment at 1 to 26 (MCDQGEVSSQNSSDYKEQRPTPRPNL) is disordered. Positions 63 to 73 (PFANGLPHFGH) match the 'HIGH' region motif. The short motif at 632–636 (KASKS) is the 'KMSKS' region element. Lys635 contacts ATP.

This sequence belongs to the class-I aminoacyl-tRNA synthetase family. IleS type 2 subfamily. In terms of assembly, monomer. Zn(2+) serves as cofactor.

It localises to the cytoplasm. It carries out the reaction tRNA(Ile) + L-isoleucine + ATP = L-isoleucyl-tRNA(Ile) + AMP + diphosphate. Functionally, catalyzes the attachment of isoleucine to tRNA(Ile). As IleRS can inadvertently accommodate and process structurally similar amino acids such as valine, to avoid such errors it has two additional distinct tRNA(Ile)-dependent editing activities. One activity is designated as 'pretransfer' editing and involves the hydrolysis of activated Val-AMP. The other activity is designated 'posttransfer' editing and involves deacylation of mischarged Val-tRNA(Ile). In Tropheryma whipplei (strain TW08/27) (Whipple's bacillus), this protein is Isoleucine--tRNA ligase.